The primary structure comprises 145 residues: Superoxide dismutase [Mn/Fe] (145 aa).

2 residues coordinate Fe(3+): His-10 and His-64. Residues His-10 and His-64 each contribute to the Mn(2+) site.

Belongs to the iron/manganese superoxide dismutase family. It depends on Mn(2+) as a cofactor. Requires Fe(3+) as cofactor.

The catalysed reaction is 2 superoxide + 2 H(+) = H2O2 + O2. In terms of biological role, destroys superoxide anion radicals which are normally produced within the cells and which are toxic to biological systems. Catalyzes the dismutation of superoxide anion radicals into O2 and H2O2 by successive reduction and oxidation of the transition metal ion at the active site. This Streptococcus porcinus protein is Superoxide dismutase [Mn/Fe] (sodA).